The sequence spans 2204 residues: Non-reducing polyketide synthase CTB1 (2204 aa).

Residues 11–250 form an N-terminal acylcarrier protein transacylase domain (SAT) region; sequence AFGDQTYDCS…TRLPITAPYH (240 aa). The 434-residue stretch at 382–815 folds into the Ketosynthase family 3 (KS3) domain; that stretch reads KSPIAILAAS…GGNTCLVLED (434 aa). Active-site for beta-ketoacyl synthase activity residues include Cys-554, His-689, and His-734. The segment at 923-1224 is malonyl-CoA:ACP transacylase (MAT) domain; the sequence is AFTGQGSAFE…QTFASINKDK (302 aa). Residues 1299 to 1619 form a product template (PT) domain region; that stretch reads SSSIHKVITN…VPKRLMHYIV (321 aa). An N-terminal hotdog fold region spans residues 1303–1439; sequence HKVITNTITA…CKIRFGSLEK (137 aa). In terms of domain architecture, PKS/mFAS DH spans 1303 to 1616; it reads HKVITNTITA…LQGVPKRLMH (314 aa). The active-site Proton acceptor; for dehydratase activity is His-1336. The segment at 1468 to 1616 is C-terminal hotdog fold; the sequence is TYRFSKGMIY…LQGVPKRLMH (149 aa). Asp-1528 (proton donor; for dehydratase activity) is an active-site residue. A disordered region spans residues 1625–1674; sequence KASGPPTEKKGSSPPVEKKASAPVAPTRPAIQRKNASIPPPATQVTPQNK. Basic and acidic residues predominate over residues 1631-1644; sequence TEKKGSSPPVEKKA. 2 consecutive Carrier domains span residues 1679–1756 and 1783–1865; these read PSVS…TRLS and DPSP…SGST. Ser-1716 and Ser-1824 each carry O-(pantetheine 4'-phosphoryl)serine. A compositionally biased stretch (polar residues) spans 1864-1875; the sequence is STESFDSTTTKP. A disordered region spans residues 1864–1931; sequence STESFDSTTT…PPKGRIPPAW (68 aa). Positions 1880–1895 are enriched in low complexity; the sequence is ATPPLTDSSASSPPSS. Residues 1945-2195 form a thioesterase (TE) domain region; it reads ILFLFPDGAG…SGAQMLVEHM (251 aa).

The cofactor is pantetheine 4'-phosphate.

The catalysed reaction is 6 malonyl-CoA + acetyl-CoA + 6 H(+) = nor-toralactone + 6 CO2 + 7 CoA + 2 H2O. It functions in the pathway mycotoxin biosynthesis. In terms of biological role, polyketide synthase; part of the gene cluster that mediates the biosynthesis of cercosporin, a light-activated, non-host-selective toxin. The perylenequinone chromophore of cercosporin absorbs light energy to attain an electronically-activated triplet state and produces active oxygen species such as the hydroxyl radical, superoxide, hydrogen peroxide or singlet oxygen upon reaction with oxygen molecules. These reactive oxygen species cause damage to various cellular components including lipids, proteins and nucleic acids. The first step of cercosporin biosynthesis is performed by the polyketide synthase CTB1 which catalyzes the formation of nor-toralactone. The starter unit acyltransferase (SAT) domain of CTB1 initiates polyketide extension by the selective utilization of acetyl-CoA, which is elongated to the heptaketide in the beta-ketoacyl synthase (KS) domain by successive condensations with six malonyl units introduced by the malonyl acyltransferase (MAT) domain. The product template (PT) domain catalyzes C4-C9 and C2-C11 aldol cyclizations and dehydrations to a trihydroxynaphthalene, which is thought to be delivered to the thioesterase (TE) domain for product release. The bifunctional enzyme CTB3 then methylates nor-toralactone to toralactone before conducting an unusual oxidative aromatic ring opening. The O-methyltransferase CTB2 further methylates the nascent OH-6 of the CBT3 product, blocking further oxidation at this site before the reductase CTB6 reduces the 2-oxopropyl ketone at position C7, giving naphthalene. The FAD-dependent monooxygenase CTB5 in concert with the multicopper oxidase CTB12 are responsible for homodimerization of naphthalene with CTB7 installing the dioxepine moiety, finally producing cercosporin. The fasciclin domain-containing protein CTB11 might act with CTB5 and CTB12 whereas the roles of CTB9 and CTB10 have still to be elucidated. In Cercospora beticola (Sugarbeet leaf spot fungus), this protein is Non-reducing polyketide synthase CTB1.